We begin with the raw amino-acid sequence, 883 residues long: Valine--tRNA ligase (883 aa).

Residues 46–56 carry the 'HIGH' region motif; the sequence is PNVTGKLHLGH. The short motif at 520–524 is the 'KMSKS' region element; it reads KMSKS. Residue Lys523 coordinates ATP. Positions 809-883 form a coiled coil; sequence LADLLNVEEE…RIDEMKKLVK (75 aa).

Belongs to the class-I aminoacyl-tRNA synthetase family. ValS type 1 subfamily. Monomer.

It localises to the cytoplasm. The catalysed reaction is tRNA(Val) + L-valine + ATP = L-valyl-tRNA(Val) + AMP + diphosphate. Its function is as follows. Catalyzes the attachment of valine to tRNA(Val). As ValRS can inadvertently accommodate and process structurally similar amino acids such as threonine, to avoid such errors, it has a 'posttransfer' editing activity that hydrolyzes mischarged Thr-tRNA(Val) in a tRNA-dependent manner. This is Valine--tRNA ligase from Streptococcus pneumoniae serotype 4 (strain ATCC BAA-334 / TIGR4).